A 205-amino-acid polypeptide reads, in one-letter code: Proteasome subunit beta type-3 (205 aa).

It belongs to the peptidase T1B family. The 26S proteasome consists of a 20S proteasome core and two 19S regulatory subunits. The 20S proteasome core is composed of 28 subunits that are arranged in four stacked rings, resulting in a barrel-shaped structure. The two end rings are each formed by seven alpha subunits, and the two central rings are each formed by seven beta subunits. The catalytic chamber with the active sites is on the inside of the barrel.

Its subcellular location is the cytoplasm. It localises to the nucleus. Non-catalytic component of the proteasome, a multicatalytic proteinase complex which is characterized by its ability to cleave peptides with Arg, Phe, Tyr, Leu, and Glu adjacent to the leaving group at neutral or slightly basic pH. The proteasome has an ATP-dependent proteolytic activity. In Drosophila melanogaster (Fruit fly), this protein is Proteasome subunit beta type-3.